Reading from the N-terminus, the 332-residue chain is Cell division protein ZipA (332 aa).

The Periplasmic segment spans residues 1–6; the sequence is MMQDLR. A helical transmembrane segment spans residues 7-27; sequence LILIVVGAIAIIALLLHGLWT. Residues 28–332 are Cytoplasmic-facing; the sequence is SRKERSSLFR…RLREVLENNA (305 aa). Composition is skewed to basic and acidic residues over residues 34–51 and 61–72; these read SLFRDRPAKRSKKEREQS and GEVRVRSAHPED. The segment at 34 to 184 is disordered; the sequence is SLFRDRPAKR…PAVAHEPQPA (151 aa). The span at 98-107 shows a compositional bias: low complexity; sequence PAPRAVQPAA. A compositionally biased stretch (acidic residues) spans 121-136; it reads DDILLDNYAQEEDDEP. The segment covering 155–171 has biased composition (low complexity); it reads PAAEPAFHAEPAHQPQP.

Belongs to the ZipA family. As to quaternary structure, interacts with FtsZ via their C-terminal domains.

Its subcellular location is the cell inner membrane. In terms of biological role, essential cell division protein that stabilizes the FtsZ protofilaments by cross-linking them and that serves as a cytoplasmic membrane anchor for the Z ring. Also required for the recruitment to the septal ring of downstream cell division proteins. This is Cell division protein ZipA from Serratia proteamaculans (strain 568).